Consider the following 278-residue polypeptide: Phosphonates import ATP-binding protein PhnC 2 (278 aa).

Positions 5-253 (IRVDSLNKTF…FLNELYGAEG (249 aa)) constitute an ABC transporter domain. 37–44 (GASGSGKS) provides a ligand contact to ATP.

It belongs to the ABC transporter superfamily. Phosphonates importer (TC 3.A.1.9.1) family. In terms of assembly, the complex is composed of two ATP-binding proteins (PhnC), two transmembrane proteins (PhnE) and a solute-binding protein (PhnD).

The protein resides in the cell inner membrane. It carries out the reaction phosphonate(out) + ATP + H2O = phosphonate(in) + ADP + phosphate + H(+). Functionally, part of the ABC transporter complex PhnCDE involved in phosphonates import. Responsible for energy coupling to the transport system. The sequence is that of Phosphonates import ATP-binding protein PhnC 2 from Pseudomonas aeruginosa (strain ATCC 15692 / DSM 22644 / CIP 104116 / JCM 14847 / LMG 12228 / 1C / PRS 101 / PAO1).